A 296-amino-acid polypeptide reads, in one-letter code: ATP synthase gamma chain (296 aa).

The disordered stretch occupies residues 194-216; the sequence is IPASAGQAANDNAGSDQPAGDYE.

It belongs to the ATPase gamma chain family. F-type ATPases have 2 components, CF(1) - the catalytic core - and CF(0) - the membrane proton channel. CF(1) has five subunits: alpha(3), beta(3), gamma(1), delta(1), epsilon(1). CF(0) has three main subunits: a, b and c.

It is found in the cell inner membrane. In terms of biological role, produces ATP from ADP in the presence of a proton gradient across the membrane. The gamma chain is believed to be important in regulating ATPase activity and the flow of protons through the CF(0) complex. In Acidiphilium cryptum (strain JF-5), this protein is ATP synthase gamma chain.